Here is a 319-residue protein sequence, read N- to C-terminus: Acetyl esterase (319 aa).

The Involved in the stabilization of the negatively charged intermediate by the formation of the oxyanion hole motif lies at 91-93; the sequence is HGG. Active-site residues include Ser165, Asp262, and His292.

This sequence belongs to the 'GDXG' lipolytic enzyme family. Homodimer. Interacts with MalT and MelA.

Its subcellular location is the cytoplasm. Its function is as follows. Displays esterase activity towards short chain fatty esters (acyl chain length of up to 8 carbons). Able to hydrolyze triacetylglycerol (triacetin) and tributyrylglycerol (tributyrin), but not trioleylglycerol (triolein) or cholesterol oleate. Negatively regulates MalT activity by antagonizing maltotriose binding. Inhibits MelA galactosidase activity. This is Acetyl esterase from Escherichia coli (strain 55989 / EAEC).